The primary structure comprises 223 residues: Deoxyribose-phosphate aldolase (223 aa).

Catalysis depends on D91, which acts as the Proton donor/acceptor. Residue K154 is the Schiff-base intermediate with acetaldehyde of the active site. K183 (proton donor/acceptor) is an active-site residue.

This sequence belongs to the DeoC/FbaB aldolase family. DeoC type 1 subfamily.

It is found in the cytoplasm. The catalysed reaction is 2-deoxy-D-ribose 5-phosphate = D-glyceraldehyde 3-phosphate + acetaldehyde. Its pathway is carbohydrate degradation; 2-deoxy-D-ribose 1-phosphate degradation; D-glyceraldehyde 3-phosphate and acetaldehyde from 2-deoxy-alpha-D-ribose 1-phosphate: step 2/2. Its function is as follows. Catalyzes a reversible aldol reaction between acetaldehyde and D-glyceraldehyde 3-phosphate to generate 2-deoxy-D-ribose 5-phosphate. The polypeptide is Deoxyribose-phosphate aldolase (Lysinibacillus sphaericus (strain C3-41)).